Here is a 163-residue protein sequence, read N- to C-terminus: Inorganic pyrophosphatase (163 aa).

Lys-21, Arg-35, and Tyr-47 together coordinate substrate. Mg(2+)-binding residues include Asp-57, Asp-62, and Asp-94. Substrate is bound at residue Tyr-131.

Belongs to the PPase family. As to quaternary structure, homohexamer. It depends on Mg(2+) as a cofactor.

It localises to the cytoplasm. The enzyme catalyses diphosphate + H2O = 2 phosphate + H(+). Its function is as follows. Catalyzes the hydrolysis of inorganic pyrophosphate (PPi) forming two phosphate ions. The polypeptide is Inorganic pyrophosphatase (Halalkalibacterium halodurans (strain ATCC BAA-125 / DSM 18197 / FERM 7344 / JCM 9153 / C-125) (Bacillus halodurans)).